The chain runs to 462 residues: GTPase Der (462 aa).

2 consecutive EngA-type G domains span residues 3–166 and 175–348; these read PVIA…ITEM and IKIA…HSAI. GTP-binding positions include 9-16, 56-60, 118-121, 181-188, 228-232, and 293-296; these read GRPNVGKS, DTGGI, NKTD, DTAGV, and NKWD. Positions 349–433 constitute a KH-like domain; sequence QSFSTPKLTR…PLKIEFKGGQ (85 aa).

The protein belongs to the TRAFAC class TrmE-Era-EngA-EngB-Septin-like GTPase superfamily. EngA (Der) GTPase family. In terms of assembly, associates with the 50S ribosomal subunit.

GTPase that plays an essential role in the late steps of ribosome biogenesis. In Legionella pneumophila (strain Lens), this protein is GTPase Der.